A 102-amino-acid polypeptide reads, in one-letter code: RNA-binding protein Hfq (102 aa).

The Sm domain maps to 9–68 (DPFLNALRRERVPVSIYLVNGIKLQGQIESFDQFVILLKNTVSQMVYKHAISTVVPSRPV). Residues 63-102 (VPSRPVSHHSNNAGGGASNNYHHGSNAQGSTAQQDSEETE) form a disordered region. Positions 70–88 (HHSNNAGGGASNNYHHGSN) are enriched in low complexity.

It belongs to the Hfq family. Homohexamer.

In terms of biological role, RNA chaperone that binds small regulatory RNA (sRNAs) and mRNAs to facilitate mRNA translational regulation in response to envelope stress, environmental stress and changes in metabolite concentrations. Also binds with high specificity to tRNAs. The protein is RNA-binding protein Hfq of Salmonella agona (strain SL483).